Consider the following 227-residue polypeptide: E3 ubiquitin-protein ligase ZNRF1 (227 aa).

The tract at residues 1 to 42 (MGGKQSTAARSRGPFPGVSTDDSAVPPPGGAPHFGHYRTGGG) is disordered. Gly-2 is lipidated: N-myristoyl glycine. A required for endosomal and lysosomal localization and myristoylation region spans residues 2–10 (GGKQSTAAR). Phosphoserine occurs at positions 50, 52, and 53. The interval 65 to 105 (GGVPFSLYTPASRGTGDSERAPGGGGSTSDSTYAHGNGYQE) is disordered. Position 103 is a phosphotyrosine (Tyr-103). Position 123 is a phosphoserine (Ser-123). The RING-type; atypical zinc finger occupies 184–225 (CVICLEELLQGDTIARLPCLCIYHKSCIDSWFEVNRSCPEHP).

Interacts with AKT1, GLUL and TUBB2A. Interacts with ZNRF2. Interacts (via its RING domain) with UBE2N. Interacts (when phosphorylated) with YWHAE. In terms of processing, N-myristoylation targets ZNRF1 to intracellular membranes. Phosphorylated by SRC at Tyr-103; leading to 'Lys-63'-linked ubiquitination of TLR3, lysosomal trafficking and degradation.

The protein resides in the endosome. Its subcellular location is the lysosome. The protein localises to the membrane. It is found in the cytoplasmic vesicle. It localises to the secretory vesicle. The protein resides in the synaptic vesicle membrane. It carries out the reaction S-ubiquitinyl-[E2 ubiquitin-conjugating enzyme]-L-cysteine + [acceptor protein]-L-lysine = [E2 ubiquitin-conjugating enzyme]-L-cysteine + N(6)-ubiquitinyl-[acceptor protein]-L-lysine.. It participates in protein modification; protein ubiquitination. In terms of biological role, E3 ubiquitin-protein ligase that plays a role in different processes including cell differentiation, receptor recycling or regulation of inflammation. Mediates the ubiquitination of AKT1 and GLUL, thereby playing a role in neuron cells differentiation. Plays a role in the establishment and maintenance of neuronal transmission and plasticity. Regulates Schwann cells differentiation by mediating ubiquitination of GLUL. Promotes neurodegeneration by mediating 'Lys-48'-linked polyubiquitination and subsequent degradation of AKT1 in axons: degradation of AKT1 prevents AKT1-mediated phosphorylation of GSK3B, leading to GSK3B activation and phosphorylation of DPYSL2/CRMP2 followed by destabilization of microtubule assembly in axons. Ubiquitinates the Na(+)/K(+) ATPase alpha-1 subunit/ATP1A1 and thereby influences its endocytosis and/or degradation. Controls ligand-induced EGFR signaling via mediating receptor ubiquitination and recruitment of the ESCRT machinery. Acts as a negative feedback mechanism controlling TLR3 trafficking by mediating TLR3 'Lys-63'-linked polyubiquitination to reduce type I IFN production. Modulates inflammation by promoting caveolin-1/CAV1 ubiquitination and degradation to regulate TLR4-activated immune response. This is E3 ubiquitin-protein ligase ZNRF1 (Znrf1) from Mus musculus (Mouse).